Here is a 209-residue protein sequence, read N- to C-terminus: Lipopolysaccharide export system protein LptC (209 aa).

The chain crosses the membrane as a helical span at residues 7–26; the sequence is NIRWNVILGVIALCALAWFY.

It belongs to the LptC family. Component of the lipopolysaccharide transport and assembly complex. Interacts with LptA and the LptBFG transporter complex.

It is found in the cell inner membrane. Functionally, involved in the assembly of lipopolysaccharide (LPS). Required for the translocation of LPS from the inner membrane to the outer membrane. Facilitates the transfer of LPS from the inner membrane to the periplasmic protein LptA. Could be a docking site for LptA. The protein is Lipopolysaccharide export system protein LptC of Haemophilus influenzae (strain ATCC 51907 / DSM 11121 / KW20 / Rd).